The chain runs to 237 residues: Ribonuclease 3 (237 aa).

The RNase III domain maps to Leu-6–Gly-133. A Mg(2+)-binding site is contributed by Glu-46. Residue Asp-50 is part of the active site. Positions 119 and 122 each coordinate Mg(2+). Glu-122 is a catalytic residue. In terms of domain architecture, DRBM spans Asp-160–Glu-229.

The protein belongs to the ribonuclease III family. As to quaternary structure, homodimer. Requires Mg(2+) as cofactor.

Its subcellular location is the cytoplasm. The catalysed reaction is Endonucleolytic cleavage to 5'-phosphomonoester.. Functionally, digests double-stranded RNA. Involved in the processing of primary rRNA transcript to yield the immediate precursors to the large and small rRNAs (23S and 16S). Processes some mRNAs, and tRNAs when they are encoded in the rRNA operon. Processes pre-crRNA and tracrRNA of type II CRISPR loci if present in the organism. The protein is Ribonuclease 3 of Clostridium perfringens (strain 13 / Type A).